Reading from the N-terminus, the 30-residue chain is Large ribosomal subunit protein bL25 (30 aa).

Belongs to the bacterial ribosomal protein bL25 family. As to quaternary structure, part of the 50S ribosomal subunit; part of the 5S rRNA/L5/L18/L25 subcomplex. Contacts the 5S rRNA. Binds to the 5S rRNA independently of L5 and L18.

Functionally, this is one of the proteins that binds to the 5S RNA in the ribosome where it forms part of the central protuberance. The sequence is that of Large ribosomal subunit protein bL25 (rplY) from Anabaena variabilis.